Here is a 133-residue protein sequence, read N- to C-terminus: UPF0134 protein MPN_151 (133 aa).

Belongs to the UPF0134 family.

The protein is UPF0134 protein MPN_151 of Mycoplasma pneumoniae (strain ATCC 29342 / M129 / Subtype 1) (Mycoplasmoides pneumoniae).